The chain runs to 686 residues: XK-related protein 5 (686 aa).

The next 5 helical transmembrane spans lie at 33–53, 205–225, 239–259, 265–285, and 297–317; these read LLWGWLALAVLLPGFLVQALS, HFWVFVVAGAHWLVMTFWLVA, LFNLLVGAVYILCYLSFWDSP, VTFYMVMLLENIILLLLATDF, and IAGVLSGFLIGSVSLVIYYSL. 3 disordered regions span residues 339–387, 448–468, and 490–592; these read GDKT…PPEA, ALSAQQELPSSSRDPSTLENS, and FASD…APFP. The span at 340–359 shows a compositional bias: basic and acidic residues; it reads DKTERRDSPRATDLAGKRTE. Composition is skewed to polar residues over residues 450-468 and 490-509; these read SAQQELPSSSRDPSTLENS and FASDQQDEAPTQNPAATQGE. The segment covering 523–536 has biased composition (gly residues); the sequence is QGKGTGGQQRGGEG. Polar residues predominate over residues 550–567; it reads VATSSQQEGSPATLQTAH.

The protein belongs to the XK family.

The protein localises to the cell membrane. The polypeptide is XK-related protein 5 (Homo sapiens (Human)).